Here is an 85-residue protein sequence, read N- to C-terminus: Putative membrane protein insertion efficiency factor (85 aa).

It belongs to the UPF0161 family.

It localises to the cell membrane. In terms of biological role, could be involved in insertion of integral membrane proteins into the membrane. The polypeptide is Putative membrane protein insertion efficiency factor (Buchnera aphidicola subsp. Schizaphis graminum (strain Sg)).